We begin with the raw amino-acid sequence, 251 residues long: Putative imidazole glycerol phosphate synthase subunit hisF2 (251 aa).

Residue aspartate 130 is part of the active site.

This sequence belongs to the HisA/HisF family. As to quaternary structure, heterodimer of HisH and HisF.

Its subcellular location is the cytoplasm. It carries out the reaction 5-[(5-phospho-1-deoxy-D-ribulos-1-ylimino)methylamino]-1-(5-phospho-beta-D-ribosyl)imidazole-4-carboxamide + L-glutamine = D-erythro-1-(imidazol-4-yl)glycerol 3-phosphate + 5-amino-1-(5-phospho-beta-D-ribosyl)imidazole-4-carboxamide + L-glutamate + H(+). Its pathway is amino-acid biosynthesis; L-histidine biosynthesis; L-histidine from 5-phospho-alpha-D-ribose 1-diphosphate: step 5/9. Its function is as follows. IGPS catalyzes the conversion of PRFAR and glutamine to IGP, AICAR and glutamate. The HisF subunit catalyzes the cyclization activity that produces IGP and AICAR from PRFAR using the ammonia provided by the HisH subunit. This chain is Putative imidazole glycerol phosphate synthase subunit hisF2 (hisF2), found in Pseudomonas aeruginosa (strain ATCC 15692 / DSM 22644 / CIP 104116 / JCM 14847 / LMG 12228 / 1C / PRS 101 / PAO1).